The chain runs to 89 residues: Small ribosomal subunit protein uS15 (89 aa).

The protein belongs to the universal ribosomal protein uS15 family. As to quaternary structure, part of the 30S ribosomal subunit. Forms a bridge to the 50S subunit in the 70S ribosome, contacting the 23S rRNA.

In terms of biological role, one of the primary rRNA binding proteins, it binds directly to 16S rRNA where it helps nucleate assembly of the platform of the 30S subunit by binding and bridging several RNA helices of the 16S rRNA. Functionally, forms an intersubunit bridge (bridge B4) with the 23S rRNA of the 50S subunit in the ribosome. This Prosthecochloris aestuarii (strain DSM 271 / SK 413) protein is Small ribosomal subunit protein uS15.